A 467-amino-acid chain; its full sequence is uncharacterized protein (467 aa).

Sel1-like repeat units lie at residues 38-73 (PAAAFELAKHLMDADSPYQDREQGMEMLRIAAEQGH), 107-138 (PEAQVRLMYLLYASRHFEEALEWAKTSAKNNN), 139-172 (PHGQYLLAQYCRYGTPPDFETAHLLYRKSAAQGL), 173-208 (PEAHWQLGLQYRFGQGTKVDTAQAVNHLRAAAQQGY), 240-275 (PDAHAALADIYLQGKHLERNHKLALHHAEAAAAERH), 276-311 (PEGLRILGDICRYGLGIAPDTEKARHYYRQAAEAGS), 343-378 (AERLYQKAQALHYGLQCAPEYAAALKLYTEAAELGH), 379-414 (SKAQTNLGSMYYFGQGMTADYNEARKWFEKAAAKKD), and 415-450 (SMAFYNLACIHYSGHGVEPDKEKACRYLQEAINNGY).

This is an uncharacterized protein from Neisseria meningitidis serogroup B (strain ATCC BAA-335 / MC58).